A 223-amino-acid chain; its full sequence is Small ribosomal subunit protein uS3 (223 aa).

Residues 38–106 form the KH type-2 domain; that stretch reads LKRELKEKLK…EVFIDILEVN (69 aa).

This sequence belongs to the universal ribosomal protein uS3 family. Part of the 30S ribosomal subunit. Forms a tight complex with proteins S10 and S14.

Its function is as follows. Binds the lower part of the 30S subunit head. Binds mRNA in the 70S ribosome, positioning it for translation. This is Small ribosomal subunit protein uS3 from Acidobacterium capsulatum (strain ATCC 51196 / DSM 11244 / BCRC 80197 / JCM 7670 / NBRC 15755 / NCIMB 13165 / 161).